A 357-amino-acid chain; its full sequence is UPF0283 membrane protein BMEA_A1074 (357 aa).

Positions 1 to 36 (MSDKTPRKPTAFRLEQPARVSAASEQEEPRRPRAVK) are disordered. Over residues 27-36 (EEPRRPRAVK) the composition is skewed to basic and acidic residues. Helical transmembrane passes span 78–98 (ILFG…TEDL) and 109–129 (LGWT…AIIL).

This sequence belongs to the UPF0283 family.

It localises to the cell inner membrane. This chain is UPF0283 membrane protein BMEA_A1074, found in Brucella melitensis biotype 2 (strain ATCC 23457).